Reading from the N-terminus, the 275-residue chain is Large ribosomal subunit protein uL2 (275 aa).

Residues 28–38 (RPYEPLVETKS) show a composition bias toward basic and acidic residues. Disordered regions lie at residues 28-53 (RPYEPLVETKSKSGGRNNVGRITTRH) and 222-275 (GVAM…RSAK). Positions 254-275 (KGHKTRKNKRTDKMIVRRRSAK) are enriched in basic residues.

This sequence belongs to the universal ribosomal protein uL2 family. In terms of assembly, part of the 50S ribosomal subunit. Forms a bridge to the 30S subunit in the 70S ribosome.

Its function is as follows. One of the primary rRNA binding proteins. Required for association of the 30S and 50S subunits to form the 70S ribosome, for tRNA binding and peptide bond formation. It has been suggested to have peptidyltransferase activity; this is somewhat controversial. Makes several contacts with the 16S rRNA in the 70S ribosome. In Marinobacter nauticus (strain ATCC 700491 / DSM 11845 / VT8) (Marinobacter aquaeolei), this protein is Large ribosomal subunit protein uL2.